The chain runs to 395 residues: MATVDRWLLPDGIEEVLPPEAARIEVARRQVLDLFQSWGYEFVVTPHIEYLESLLTGAGSDLDLRTFKVIDPQSGRQMGFRADITPQVARIDAHTLKREGPSRLCYAGSVLHAQPRALSSSRSPIQLGAELYGDASPSSDVEVISLMLAMLQLADVPDVHMDLGHVGIYRGLARAAGLSGEVEQQLFDALQRKAIDEVIALTADLPQELATMLRALVDLCGGREVLDAARDRLAGAPAPVLAALDDLLSIAERLAARFPQLPLYFDLGELRGYHYHTGVVFAVFVPGVGQSIAQGGRYDDIGADFGRARPATGFSTDLKTLVTLGQAEIVLPSGGIWVPDSTDAALWQMVCQLRSEGQRVVQALPGQQASAAREADCDRQLIQHGEHWQVMPLAS.

It belongs to the class-II aminoacyl-tRNA synthetase family. HisZ subfamily. As to quaternary structure, heteromultimer composed of HisG and HisZ subunits.

Its subcellular location is the cytoplasm. The protein operates within amino-acid biosynthesis; L-histidine biosynthesis; L-histidine from 5-phospho-alpha-D-ribose 1-diphosphate: step 1/9. Required for the first step of histidine biosynthesis. May allow the feedback regulation of ATP phosphoribosyltransferase activity by histidine. The protein is ATP phosphoribosyltransferase regulatory subunit of Pseudomonas syringae pv. syringae (strain B728a).